Reading from the N-terminus, the 434-residue chain is Histidinol dehydrogenase (434 aa).

Y129, Q191, and N214 together coordinate NAD(+). Substrate contacts are provided by S240, Q262, and H265. Residues Q262 and H265 each coordinate Zn(2+). Residues E329 and H330 each act as proton acceptor in the active site. Positions 330, 363, 417, and 422 each coordinate substrate. A Zn(2+)-binding site is contributed by D363. Residue H422 coordinates Zn(2+).

Belongs to the histidinol dehydrogenase family. The cofactor is Zn(2+).

The catalysed reaction is L-histidinol + 2 NAD(+) + H2O = L-histidine + 2 NADH + 3 H(+). The protein operates within amino-acid biosynthesis; L-histidine biosynthesis; L-histidine from 5-phospho-alpha-D-ribose 1-diphosphate: step 9/9. Functionally, catalyzes the sequential NAD-dependent oxidations of L-histidinol to L-histidinaldehyde and then to L-histidine. The protein is Histidinol dehydrogenase of Colwellia psychrerythraea (strain 34H / ATCC BAA-681) (Vibrio psychroerythus).